We begin with the raw amino-acid sequence, 189 residues long: Mediator of RNA polymerase II transcription subunit 30 (189 aa).

The stretch at Ser138 to Ala178 forms a coiled coil.

Belongs to the plant Mediator complex subunit 30 family. As to quaternary structure, component of the Mediator complex.

It is found in the nucleus. Component of the Mediator complex, a coactivator involved in the regulated transcription of nearly all RNA polymerase II-dependent genes. Mediator functions as a bridge to convey information from gene-specific regulatory proteins to the basal RNA polymerase II transcription machinery. The Mediator complex, having a compact conformation in its free form, is recruited to promoters by direct interactions with regulatory proteins and serves for the assembly of a functional preinitiation complex with RNA polymerase II and the general transcription factors. This is Mediator of RNA polymerase II transcription subunit 30 (MED30) from Arabidopsis thaliana (Mouse-ear cress).